A 933-amino-acid polypeptide reads, in one-letter code: Bromodomain testis-specific protein (933 aa).

The segment at Met1–Ile21 is disordered. The 107-residue stretch at Arg28 to Met134 folds into the Bromo 1 domain. A Nuclear localization signal motif is present at residues Lys214–Pro225. The interval Glu235–Val263 is disordered. A Bromo 2 domain is found at Asn278–Ile385. Disordered stretches follow at residues Arg398 to Ala425, Lys576 to Ser610, and Gly627 to Thr662. Residues Glu404–Ser418 show a composition bias toward low complexity. The stretch at Glu423 to Thr448 forms a coiled coil. In terms of domain architecture, NET spans Val495–Pro577. The segment covering Lys584 to Asp603 has biased composition (basic and acidic residues). Residues Ser630–Ser660 are compositionally biased toward low complexity. Positions Ala829–Asp917 form a coiled coil.

It belongs to the BET family.

The protein localises to the nucleus. Its function is as follows. Testis-specific chromatin protein that specifically binds histone H4 acetylated at 'Lys-5' and 'Lys-8' (H4K5ac and H4K8ac, respectively) and plays a key role in spermatogenesis. Required in late pachytene spermatocytes: plays a role in meiotic and post-meiotic cells by binding to acetylated histones at the promoter of specific meiotic and post-meiotic genes, facilitating their activation at the appropriate time. In the post-meiotic phase of spermatogenesis, binds to hyperacetylated histones and participates in their general removal from DNA. Also recognizes and binds a subset of butyrylated histones: able to bind histone H4 butyrylated at 'Lys-8' (H4K8ac), while it is not able to bind H4 butyrylated at 'Lys-5' (H4K5ac). This chain is Bromodomain testis-specific protein (brdt), found in Xenopus tropicalis (Western clawed frog).